Here is a 348-residue protein sequence, read N- to C-terminus: D-fructose 1,6-bisphosphatase class 2/sedoheptulose 1,7-bisphosphatase 2 (348 aa).

The Mn(2+) site is built by D33, E57, D97, and E100. Substrate-binding positions include 100–102, Y131, 176–178, and 198–200; these read EGT, RER, and DGD. E225 lines the Mn(2+) pocket.

Belongs to the FBPase class 2 family. Homotetramer.

It catalyses the reaction beta-D-fructose 1,6-bisphosphate + H2O = beta-D-fructose 6-phosphate + phosphate. It carries out the reaction D-sedoheptulose 1,7-bisphosphate + H2O = D-sedoheptulose 7-phosphate + phosphate. The protein operates within carbohydrate biosynthesis; Calvin cycle. Functionally, catalyzes the hydrolysis of fructose 1,6-bisphosphate (Fru 1,6-P2) and sedoheptulose 1,7-bisphosphate (Sed 1,7-P2) to fructose 6-phosphate and sedoheptulose 7-phosphate, respectively. The chain is D-fructose 1,6-bisphosphatase class 2/sedoheptulose 1,7-bisphosphatase 2 from Acaryochloris marina (strain MBIC 11017).